The primary structure comprises 91 residues: Long neurotoxin OH-56 (91 aa).

Positions 1–21 (MKTLLLTLVVVTIMCLDLGYT) are cleaved as a signal peptide. Disulfide bonds link Cys-24-Cys-42, Cys-35-Cys-63, Cys-48-Cys-52, Cys-67-Cys-78, and Cys-79-Cys-84.

The protein belongs to the three-finger toxin family. Long-chain subfamily. Type II alpha-neurotoxin sub-subfamily. Expressed by the venom gland.

It localises to the secreted. Its function is as follows. Binds with high affinity to muscular (alpha-1/CHRNA1) and neuronal (alpha-7/CHRNA7) nicotinic acetylcholine receptor (nAChR) and inhibits acetylcholine from binding to the receptor, thereby impairing neuromuscular and neuronal transmission. This is Long neurotoxin OH-56 from Ophiophagus hannah (King cobra).